A 361-amino-acid polypeptide reads, in one-letter code: MQQTVIVAMSGGVDSSVVAYLFKKFTNYKVIGLFMKNWEEDSEGGLCSSTKDYEDVERVCLQLDIPYYTVSFAKEYRERVFARFLKEYSLGYTPNPDILCNREIKFDLLQKKVQELGGDYLATGHYCRLNTELQETQLLRGCDPQKDQSYFLSGTPKSALHNVLFPLGEMNKTEVRAIAAQAALPTAEKKDSTGICFIGKRPFKEFLEKFLPNKTGNVIDWDTKEIVGQHQGAHYYTIGQRRGLDLGGSEKPCYVVGKNIEENSIYIVRGEDHPQLYLRELTARELNWFTPPKSGCHCSAKVRYRSPDEACTIDYSSGDEVKVRFSQPVKAVTPGQTIAFYQGDTCLGSGVIDVPMIPSEG.

Residues 8–15 and methionine 35 each bind ATP; that span reads AMSGGVDS. The segment at 95 to 97 is interaction with target base in tRNA; the sequence is NPD. Residue cysteine 100 is the Nucleophile of the active site. An intrachain disulfide couples cysteine 100 to cysteine 196. ATP is bound at residue glycine 124. Positions 146-148 are interaction with tRNA; that stretch reads KDQ. Catalysis depends on cysteine 196, which acts as the Cysteine persulfide intermediate. The interval 303-304 is interaction with tRNA; sequence RY.

The protein belongs to the MnmA/TRMU family.

The protein localises to the cytoplasm. The enzyme catalyses S-sulfanyl-L-cysteinyl-[protein] + uridine(34) in tRNA + AH2 + ATP = 2-thiouridine(34) in tRNA + L-cysteinyl-[protein] + A + AMP + diphosphate + H(+). In terms of biological role, catalyzes the 2-thiolation of uridine at the wobble position (U34) of tRNA, leading to the formation of s(2)U34. This Chlamydia pneumoniae (Chlamydophila pneumoniae) protein is tRNA-specific 2-thiouridylase MnmA.